Here is a 255-residue protein sequence, read N- to C-terminus: Thiazole synthase (255 aa).

Residue lysine 95 is the Schiff-base intermediate with DXP of the active site. 1-deoxy-D-xylulose 5-phosphate contacts are provided by residues glycine 156, 182–183 (AG), and 204–205 (NT).

Belongs to the ThiG family. Homotetramer. Forms heterodimers with either ThiH or ThiS.

The protein localises to the cytoplasm. The catalysed reaction is [ThiS sulfur-carrier protein]-C-terminal-Gly-aminoethanethioate + 2-iminoacetate + 1-deoxy-D-xylulose 5-phosphate = [ThiS sulfur-carrier protein]-C-terminal Gly-Gly + 2-[(2R,5Z)-2-carboxy-4-methylthiazol-5(2H)-ylidene]ethyl phosphate + 2 H2O + H(+). It functions in the pathway cofactor biosynthesis; thiamine diphosphate biosynthesis. Catalyzes the rearrangement of 1-deoxy-D-xylulose 5-phosphate (DXP) to produce the thiazole phosphate moiety of thiamine. Sulfur is provided by the thiocarboxylate moiety of the carrier protein ThiS. In vitro, sulfur can be provided by H(2)S. This is Thiazole synthase from Vibrio campbellii (strain ATCC BAA-1116).